Here is a 107-residue protein sequence, read N- to C-terminus: 4-carboxymethyl-4-methylbutenolide mutase (107 aa).

Residue His-26 is the Proton donor/acceptor of the active site. Residues His-26 and Tyr-39 each contribute to the 3-methylmuconolactone site. 4-methylmuconolactone is bound by residues His-26 and Tyr-39.

This sequence belongs to the MmlI family. As to quaternary structure, homodimer.

The catalysed reaction is 4-methylmuconolactone = 3-methylmuconolactone. Inhibited by p-chloromercuribenzoate. Functionally, isomerase involved in the degradation of 4-methylsalicylate and 5-methylsalicylate. Catalyzes the isomerization of the dead-end metabolite 4-methylmuconolactone (4-ML) to 3-methylmuconolactone (3-ML), which can then be further degraded through a modified 3-oxoadipate pathway. Can also use 1-methylbislactone but not 3-methyl-cis,cis-muconate. In Pseudomonas reinekei, this protein is 4-carboxymethyl-4-methylbutenolide mutase.